The chain runs to 1379 residues: DNA-directed RNA polymerase subunit beta'' (1379 aa).

Zn(2+) contacts are provided by C220, C293, C300, and C303.

This sequence belongs to the RNA polymerase beta' chain family. RpoC2 subfamily. In plastids the minimal PEP RNA polymerase catalytic core is composed of four subunits: alpha, beta, beta', and beta''. When a (nuclear-encoded) sigma factor is associated with the core the holoenzyme is formed, which can initiate transcription. It depends on Zn(2+) as a cofactor.

The protein localises to the plastid. Its subcellular location is the chloroplast. The catalysed reaction is RNA(n) + a ribonucleoside 5'-triphosphate = RNA(n+1) + diphosphate. Functionally, DNA-dependent RNA polymerase catalyzes the transcription of DNA into RNA using the four ribonucleoside triphosphates as substrates. The polypeptide is DNA-directed RNA polymerase subunit beta'' (Crucihimalaya wallichii (Rock-cress)).